An 830-amino-acid chain; its full sequence is Envelope glycoprotein B (830 aa).

The signal sequence occupies residues 1 to 22; that stretch reads MSKMAVLFLAVFLMNSVLMIYC. The Virion surface segment spans residues 23-688; sequence DPDHYIRAGY…GGVVSFLKNP (666 aa). 4 cysteine pairs are disulfide-bonded: cysteine 41-cysteine 482, cysteine 58-cysteine 438, cysteine 131-cysteine 197, and cysteine 290-cysteine 337. Residues 98–104 form an involved in fusion and/or binding to host membrane region; it reads SYRDVGV. Asparagine 155 carries an N-linked (GlcNAc...) asparagine; by host glycan. The tract at residues 184-191 is involved in fusion and/or binding to host membrane; that stretch reads GPLWLYST. N-linked (GlcNAc...) asparagine; by host glycans are attached at residues asparagine 228, asparagine 247, asparagine 286, asparagine 307, asparagine 329, asparagine 355, asparagine 361, and asparagine 486. A disulfide bridge links cysteine 510 with cysteine 548. Hydrophobic membrane proximal region stretches follow at residues 634-686 and 644-685; these read IEAK…SFLK and SYVN…VSFL. Residues 689 to 709 form a helical membrane-spanning segment; that stretch reads FGGGLMLILAIVVVVIIIVVF. Residues 710–830 are Intravirion-facing; sequence VRQRHVLSKP…GYKSVNVEEA (121 aa). Positions 822–825 match the Internalization motif motif; that stretch reads YKSV.

The protein belongs to the herpesviridae glycoprotein B family. In terms of assembly, homotrimer; disulfide-linked. Binds to heparan sulfate proteoglycans. Interacts with gH/gL heterodimer. In terms of processing, a proteolytic cleavage by host furin generates two subunits that remain linked by disulfide bonds.

Its subcellular location is the virion membrane. It is found in the host cell membrane. It localises to the host endosome membrane. The protein localises to the host Golgi apparatus membrane. Its function is as follows. Envelope glycoprotein that forms spikes at the surface of virion envelope. Essential for the initial attachment to heparan sulfate moieties of the host cell surface proteoglycans. Involved in fusion of viral and cellular membranes leading to virus entry into the host cell. Following initial binding to its host receptors, membrane fusion is mediated by the fusion machinery composed at least of gB and the heterodimer gH/gL. May be involved in the fusion between the virion envelope and the outer nuclear membrane during virion egress. The protein is Envelope glycoprotein B of Human herpesvirus 6A (strain Uganda-1102) (HHV-6 variant A).